The following is a 481-amino-acid chain: Glutamyl-tRNA(Gln) amidotransferase subunit A (481 aa).

Catalysis depends on charge relay system residues Lys-75 and Ser-150. Ser-174 (acyl-ester intermediate) is an active-site residue.

The protein belongs to the amidase family. GatA subfamily. Heterotrimer of A, B and C subunits.

The enzyme catalyses L-glutamyl-tRNA(Gln) + L-glutamine + ATP + H2O = L-glutaminyl-tRNA(Gln) + L-glutamate + ADP + phosphate + H(+). In terms of biological role, allows the formation of correctly charged Gln-tRNA(Gln) through the transamidation of misacylated Glu-tRNA(Gln) in organisms which lack glutaminyl-tRNA synthetase. The reaction takes place in the presence of glutamine and ATP through an activated gamma-phospho-Glu-tRNA(Gln). This is Glutamyl-tRNA(Gln) amidotransferase subunit A from Macrococcus caseolyticus (strain JCSC5402) (Macrococcoides caseolyticum).